We begin with the raw amino-acid sequence, 209 residues long: Ribonuclease HII (209 aa).

The RNase H type-2 domain occupies 6–209 (SLEAGIDEAG…IKRMTNSRLF (204 aa)). Positions 12, 13, and 108 each coordinate a divalent metal cation.

The protein belongs to the RNase HII family. Requires Mn(2+) as cofactor. The cofactor is Mg(2+).

It localises to the cytoplasm. It catalyses the reaction Endonucleolytic cleavage to 5'-phosphomonoester.. Endonuclease that specifically degrades the RNA of RNA-DNA hybrids. In Caldivirga maquilingensis (strain ATCC 700844 / DSM 13496 / JCM 10307 / IC-167), this protein is Ribonuclease HII.